Consider the following 611-residue polypeptide: uncharacterized protein (611 aa).

In terms of domain architecture, SAC spans 51–351 (LYGFIRLKIY…DYHKQGSRNL (301 aa)).

To yeast RSD1 and S.pombe SpBC19F5.03.

This is an uncharacterized protein from Schizosaccharomyces pombe (strain 972 / ATCC 24843) (Fission yeast).